The primary structure comprises 156 residues: RNA polymerase sigma factor SigS (156 aa).

The short motif at 29-44 (EYYQLLLIKMWQLSQI) is the Polymerase core binding element. Residues 126 to 145 (QFEIAEIMSLSLSTIKLIKM) constitute a DNA-binding region (H-T-H motif).

This sequence belongs to the sigma-70 factor family.

In terms of biological role, sigma factors are initiation factors that promote the attachment of RNA polymerase to specific initiation sites and are then released. Sigma-S contributes to the protection against external stress, thus playing a role in cellular fitness and survival. The sequence is that of RNA polymerase sigma factor SigS (sigS) from Staphylococcus aureus (strain NCTC 8325 / PS 47).